The chain runs to 908 residues: DNA mismatch repair protein MutS (908 aa).

662–669 (GPNMGGKS) contacts ATP.

The protein belongs to the DNA mismatch repair MutS family.

In terms of biological role, this protein is involved in the repair of mismatches in DNA. It is possible that it carries out the mismatch recognition step. This protein has a weak ATPase activity. The sequence is that of DNA mismatch repair protein MutS from Rhizobium johnstonii (strain DSM 114642 / LMG 32736 / 3841) (Rhizobium leguminosarum bv. viciae).